Consider the following 711-residue polypeptide: Nuclear intron maturase 1, mitochondrial (711 aa).

Residues 147-459 (KDKISMNGGE…RGIQFLDHII (313 aa)) form the Reverse transcriptase domain. The intron maturase type-2 stretch occupies residues 484–653 (GTLLSVSASL…QVLQEYIRLQ (170 aa)).

Belongs to the plant nuclear intron maturase (nMat) family. Expressed at low levels in seedlings and accumulates in adult plants.

The protein resides in the mitochondrion. In terms of biological role, nuclear-encoded maturase required for splicing of group-II introns in mitochondria. Necessary for mitochondrial biogenesis during early developmental stages. Involved in the splicing of mitochondrial NAD4 transcripts. Required for trans-splicing of NAD1 intron 1 and also functions in cis-splicing of NAD2 intron 1 and NAD4 intron 2. Required for the regulation of fundamental metabolic pathways such as amino acid metabolism, triacylglycerol degradation and polysaccharide synthesis (cellulose and starch) during the early stage of plant growth. Implicated in stress responses. The polypeptide is Nuclear intron maturase 1, mitochondrial (Arabidopsis thaliana (Mouse-ear cress)).